The following is a 623-amino-acid chain: Putative ABC transporter ATP-binding protein MG014 homolog (623 aa).

The ABC transmembrane type-1 domain maps to 16-325 (LILAPLFTFA…YIVLGLILTS (310 aa)). The next 6 helical transmembrane spans lie at 27 to 47 (IIID…VFSI), 86 to 106 (VILL…CASI), 157 to 177 (FLRL…FAIA), 180 to 200 (SDMS…IGIL), 266 to 286 (NIPF…LLVF), and 307 to 327 (IFAF…TSLT). The region spanning 365–611 (LEFKNVAFGL…CDIYVKMKQA (247 aa)) is the ABC transporter domain. 400–407 (GPTGSGKS) contributes to the ATP binding site.

It belongs to the ABC transporter superfamily.

It localises to the cell membrane. The sequence is that of Putative ABC transporter ATP-binding protein MG014 homolog from Mycoplasma pneumoniae (strain ATCC 29342 / M129 / Subtype 1) (Mycoplasmoides pneumoniae).